Consider the following 98-residue polypeptide: Co-chaperonin GroES (98 aa).

This sequence belongs to the GroES chaperonin family. In terms of assembly, heptamer of 7 subunits arranged in a ring. Interacts with the chaperonin GroEL.

It is found in the cytoplasm. Functionally, together with the chaperonin GroEL, plays an essential role in assisting protein folding. The GroEL-GroES system forms a nano-cage that allows encapsulation of the non-native substrate proteins and provides a physical environment optimized to promote and accelerate protein folding. GroES binds to the apical surface of the GroEL ring, thereby capping the opening of the GroEL channel. The chain is Co-chaperonin GroES from Kineococcus radiotolerans (strain ATCC BAA-149 / DSM 14245 / SRS30216).